Here is a 706-residue protein sequence, read N- to C-terminus: Fatty acid oxidation complex subunit alpha (706 aa).

Positions Met-1–Pro-188 are enoyl-CoA hydratase. The 3-hydroxyacyl-CoA dehydrogenase stretch occupies residues Arg-308 to Phe-706.

In the N-terminal section; belongs to the enoyl-CoA hydratase/isomerase family. This sequence in the central section; belongs to the 3-hydroxyacyl-CoA dehydrogenase family. As to quaternary structure, heterotetramer of two alpha chains (FadJ) and two beta chains (FadI).

The protein resides in the cytoplasm. It carries out the reaction a (3S)-3-hydroxyacyl-CoA = a (2E)-enoyl-CoA + H2O. The enzyme catalyses a 4-saturated-(3S)-3-hydroxyacyl-CoA = a (3E)-enoyl-CoA + H2O. The catalysed reaction is a (3S)-3-hydroxyacyl-CoA + NAD(+) = a 3-oxoacyl-CoA + NADH + H(+). It catalyses the reaction (3S)-3-hydroxybutanoyl-CoA = (3R)-3-hydroxybutanoyl-CoA. It participates in lipid metabolism; fatty acid beta-oxidation. Its function is as follows. Catalyzes the formation of a hydroxyacyl-CoA by addition of water on enoyl-CoA. Also exhibits 3-hydroxyacyl-CoA epimerase and 3-hydroxyacyl-CoA dehydrogenase activities. This is Fatty acid oxidation complex subunit alpha from Shewanella sp. (strain W3-18-1).